The following is a 143-amino-acid chain: Midkine (143 aa).

Positions 1-20 (MQHRGFLLLTLLALLALTSA) are cleaved as a signal peptide. 5 disulfides stabilise this stretch: cysteine 37–cysteine 61, cysteine 45–cysteine 70, cysteine 52–cysteine 74, cysteine 84–cysteine 116, and cysteine 94–cysteine 126.

The protein belongs to the pleiotrophin family. Homodimer. Interacts with ALK. Interacts with LRP1; promotes neuronal survival. Interacts with LRP2. Interacts with NCAM1. Interacts (via C-terminal) with PTPRZ1 (via chondroitin sulfate chains); this interaction is inhibited by PTN; this interaction promotes neuronal migration. Interacts with NCL; this interaction promotes NCL clustering and lateral movements of this complex into lipid rafts leading to MDK internalization. Interacts with LRP6 and LRP8: this interaction is calcium dependent. Interacts with ITGA4. Interacts with ITGA6. Interacts with ITGB1. Interacts with ITGA4:ITGB1 complex; this interaction mediates MDK-induced osteoblast cells migration through PXN phosphorylation. Interacts with ITGA6:ITGB1 complex; this interaction mediates MDK-induced neurite outgrowth. Interacts with NOTCH2; this interaction mediates a nuclear accumulation of NOTCH2 and therefore activation of NOTCH2 signaling leading to interaction between HES1 and STAT3. Interacts with GPC2 (via heparan sulfate chain); this interaction is inhibited by heparin followed by chondroitin sulfate E; this interaction induces GPC2 clustering through heparan sulfate chain; this interaction induces neuronal cell adhesion and neurite outgrowth. Interacts with SDC3; this interaction induces SDC3 clustering; this interaction induces neuronal cell adhesion and neurite outgrowth. Interacts with SDC1. Interacts with CSPG5; this interaction promotes elongation of oligodendroglial precursor-like cells. In terms of tissue distribution, expressed in various tumor cell lines. In insulinoma tissue predominantly expressed in precancerous lesions.

Its subcellular location is the secreted. Its function is as follows. Secreted protein that functions as a cytokine and growth factor and mediates its signal through cell-surface proteoglycan and non-proteoglycan receptors. Binds cell-surface proteoglycan receptors via their chondroitin sulfate (CS) groups. Thereby regulates many processes like inflammatory response, cell proliferation, cell adhesion, cell growth, cell survival, tissue regeneration, cell differentiation and cell migration. Participates in inflammatory processes by exerting two different activities. Firstly, mediates neutrophils and macrophages recruitment to the sites of inflammation both by direct action by cooperating namely with ITGB2 via LRP1 and by inducing chemokine expression. This inflammation can be accompanied by epithelial cell survival and smooth muscle cell migration after renal and vessel damage, respectively. Secondly, suppresses the development of tolerogenic dendric cells thereby inhibiting the differentiation of regulatory T cells and also promote T cell expansion through NFAT signaling and Th1 cell differentiation. Promotes tissue regeneration after injury or trauma. After heart damage negatively regulates the recruitment of inflammatory cells and mediates cell survival through activation of anti-apoptotic signaling pathways via MAPKs and AKT pathways through the activation of angiogenesis. Also facilitates liver regeneration as well as bone repair by recruiting macrophage at trauma site and by promoting cartilage development by facilitating chondrocyte differentiation. Plays a role in brain by promoting neural precursor cells survival and growth through interaction with heparan sulfate proteoglycans. Binds PTPRZ1 and promotes neuronal migration and embryonic neurons survival. Binds SDC3 or GPC2 and mediates neurite outgrowth and cell adhesion. Binds chondroitin sulfate E and heparin leading to inhibition of neuronal cell adhesion induced by binding with GPC2. Binds CSPG5 and promotes elongation of oligodendroglial precursor-like cells. Also binds ITGA6:ITGB1 complex; this interaction mediates MDK-induced neurite outgrowth. Binds LRP1; promotes neuronal survival. Binds ITGA4:ITGB1 complex; this interaction mediates MDK-induced osteoblast cells migration through PXN phosphorylation. Binds anaplastic lymphoma kinase (ALK) which induces ALK activation and subsequent phosphorylation of the insulin receptor substrate (IRS1), followed by the activation of mitogen-activated protein kinase (MAPK) and PI3-kinase, and the induction of cell proliferation. Promotes epithelial to mesenchymal transition through interaction with NOTCH2. During arteriogenesis, plays a role in vascular endothelial cell proliferation by inducing VEGFA expression and release which in turn induces nitric oxide synthase expression. Moreover activates vasodilation through nitric oxide synthase activation. Negatively regulates bone formation in response to mechanical load by inhibiting Wnt/beta-catenin signaling in osteoblasts. In addition plays a role in hippocampal development, working memory, auditory response, early fetal adrenal gland development and the female reproductive system. This Homo sapiens (Human) protein is Midkine.